Reading from the N-terminus, the 591-residue chain is L-fucose isomerase (591 aa).

Active-site proton acceptor residues include glutamate 337 and aspartate 361. The Mn(2+) site is built by glutamate 337, aspartate 361, and histidine 528.

It belongs to the L-fucose isomerase family. In terms of assembly, homohexamer. The cofactor is Mn(2+).

It localises to the cytoplasm. The catalysed reaction is L-fucose = L-fuculose. It functions in the pathway carbohydrate degradation; L-fucose degradation; L-lactaldehyde and glycerone phosphate from L-fucose: step 1/3. Functionally, converts the aldose L-fucose into the corresponding ketose L-fuculose. This chain is L-fucose isomerase, found in Salmonella typhi.